Reading from the N-terminus, the 699-residue chain is Polyribonucleotide nucleotidyltransferase (699 aa).

The Mg(2+) site is built by aspartate 485 and aspartate 491. Positions 552-611 (PRITTIKINPEKIRDVIGKGGAVIRALTEETGTTIELEDDGTVKIASSNGEATKEAIRRI) constitute a KH domain. The 69-residue stretch at 621–689 (GRIYNGKVIR…RQGRVRLSIK (69 aa)) folds into the S1 motif domain.

It belongs to the polyribonucleotide nucleotidyltransferase family. As to quaternary structure, component of the RNA degradosome, which is a multiprotein complex involved in RNA processing and mRNA degradation. Requires Mg(2+) as cofactor.

It localises to the cytoplasm. It carries out the reaction RNA(n+1) + phosphate = RNA(n) + a ribonucleoside 5'-diphosphate. Its function is as follows. Involved in mRNA degradation. Catalyzes the phosphorolysis of single-stranded polyribonucleotides processively in the 3'- to 5'-direction. The sequence is that of Polyribonucleotide nucleotidyltransferase from Shewanella sp. (strain MR-4).